Consider the following 466-residue polypeptide: ATP synthase subunit beta (466 aa).

G148–T155 contacts ATP.

It belongs to the ATPase alpha/beta chains family. As to quaternary structure, F-type ATPases have 2 components, CF(1) - the catalytic core - and CF(0) - the membrane proton channel. CF(1) has five subunits: alpha(3), beta(3), gamma(1), delta(1), epsilon(1). CF(0) has three main subunits: a(1), b(2) and c(9-12). The alpha and beta chains form an alternating ring which encloses part of the gamma chain. CF(1) is attached to CF(0) by a central stalk formed by the gamma and epsilon chains, while a peripheral stalk is formed by the delta and b chains.

The protein resides in the cell inner membrane. The enzyme catalyses ATP + H2O + 4 H(+)(in) = ADP + phosphate + 5 H(+)(out). Produces ATP from ADP in the presence of a proton gradient across the membrane. The catalytic sites are hosted primarily by the beta subunits. The chain is ATP synthase subunit beta from Xylella fastidiosa (strain 9a5c).